The sequence spans 879 residues: Leucine--tRNA ligase (879 aa).

The short motif at 43–53 is the 'HIGH' region element; it reads PYPSGRIHMGH. The 'KMSKS' region motif lies at 636–640; that stretch reads KMSKS. Residue Lys639 coordinates ATP.

It belongs to the class-I aminoacyl-tRNA synthetase family.

Its subcellular location is the cytoplasm. It carries out the reaction tRNA(Leu) + L-leucine + ATP = L-leucyl-tRNA(Leu) + AMP + diphosphate. The protein is Leucine--tRNA ligase of Afipia carboxidovorans (strain ATCC 49405 / DSM 1227 / KCTC 32145 / OM5) (Oligotropha carboxidovorans).